A 605-amino-acid chain; its full sequence is Insulin-like growth factor-binding protein complex acid labile subunit (605 aa).

The signal sequence occupies residues 1 to 27; that stretch reads MALRKGGLALALLLLSWVALGPRSLEG. One can recognise an LRRNT domain in the interval 32 to 74; the sequence is TPGEAEGPACPAACVCSYDDDADELSVFCSSRNLTRLPDGVPG. Intrachain disulfides connect cysteine 41/cysteine 47 and cysteine 45/cysteine 60. N-linked (GlcNAc...) asparagine glycosylation is found at asparagine 64, asparagine 85, and asparagine 96. LRR repeat units follow at residues 75 to 96, 99 to 120, 123 to 144, 147 to 168, 171 to 192, 195 to 216, 219 to 240, 243 to 264, 267 to 288, 291 to 312, 315 to 336, 339 to 360, 363 to 384, 387 to 408, 411 to 432, 435 to 456, 459 to 480, 483 to 504, and 507 to 528; these read GTQA…AFQN, SLGF…ALLG, NLCH…TFAH, ALAS…LFEG, SLWD…AFRG, SLRE…LFSG, ELRE…VFVQ, RLQK…AFLG, ALRW…TFPG, GLRV…TFKD, FLEE…SFEG, QLEV…AFLG, NVAV…VFRG, KLHS…TFTG, GLRR…SLWG, ELLE…LFQG, KLEY…ALGP, RAFW…LLAP, and RLRY…PPGL. N-linked (GlcNAc...) asparagine glycosylation occurs at asparagine 368. Asparagine 515 carries an N-linked (GlcNAc...) asparagine glycan. An LRRCT domain is found at 536–605; that stretch reads NPWDCGCPLK…DLSEAHFAPC (70 aa). Disulfide bonds link cysteine 540–cysteine 583, cysteine 542–cysteine 605, and cysteine 566–cysteine 571. N-linked (GlcNAc...) asparagine glycosylation is present at asparagine 580.

As to quaternary structure, forms a ternary complex with IGF1 and IGFBP3. In terms of tissue distribution, plasma.

Its subcellular location is the secreted. It localises to the extracellular space. Involved in protein-protein interactions that result in protein complexes, receptor-ligand binding or cell adhesion. This chain is Insulin-like growth factor-binding protein complex acid labile subunit (IGFALS), found in Homo sapiens (Human).